The chain runs to 65 residues: Large ribosomal subunit protein bL35 (65 aa).

Belongs to the bacterial ribosomal protein bL35 family.

This Alkalilimnicola ehrlichii (strain ATCC BAA-1101 / DSM 17681 / MLHE-1) protein is Large ribosomal subunit protein bL35.